A 1040-amino-acid chain; its full sequence is Multidrug resistance protein MdtB (1040 aa).

11 helical membrane passes run 15 to 37, 345 to 362, 367 to 389, 396 to 418, 438 to 460, 472 to 494, 535 to 557, 867 to 889, 909 to 931, 968 to 990, and 1000 to 1022; these read LFIMRPVATTLLMVAILLAGIIG, FELMMAIALVVMIIYLFL, ATIIPGVAVPLSLIGTFAVMVFL, LTLMALTIATGFVVDDAIVVIEN, GEIGFTIISLTFSLIAVLIPLLF, FAITLAVAILISAVVSLTLTPMM, HPWLTLSVALSTLLLSVLLWVFI, VWLIVAAVVAMYIVLGILYESFI, LMIAGSELDVIAIIGIILLIGIV, ILMTTLAALLGALPLMLSTGVGA, and MVGGLIVSQVLTLFTTPVIYLLF.

This sequence belongs to the resistance-nodulation-cell division (RND) (TC 2.A.6) family. MdtB subfamily. As to quaternary structure, part of a tripartite efflux system composed of MdtA, MdtB and MdtC. MdtB forms a heteromultimer with MdtC.

It is found in the cell inner membrane. Its function is as follows. The MdtABC tripartite complex confers resistance against novobiocin and deoxycholate. This chain is Multidrug resistance protein MdtB, found in Escherichia coli O157:H7.